Here is a 447-residue protein sequence, read N- to C-terminus: Enolase (447 aa).

Glutamine 168 serves as a coordination point for (2R)-2-phosphoglycerate. Catalysis depends on glutamate 210, which acts as the Proton donor. Mg(2+) contacts are provided by aspartate 247, glutamate 292, and aspartate 319. (2R)-2-phosphoglycerate is bound by residues lysine 344, arginine 373, serine 374, and lysine 395. Lysine 344 serves as the catalytic Proton acceptor.

It belongs to the enolase family. As to quaternary structure, component of the RNA degradosome, a multiprotein complex involved in RNA processing and mRNA degradation. Mg(2+) serves as cofactor.

Its subcellular location is the cytoplasm. The protein resides in the secreted. It localises to the cell surface. It carries out the reaction (2R)-2-phosphoglycerate = phosphoenolpyruvate + H2O. The protein operates within carbohydrate degradation; glycolysis; pyruvate from D-glyceraldehyde 3-phosphate: step 4/5. Catalyzes the reversible conversion of 2-phosphoglycerate (2-PG) into phosphoenolpyruvate (PEP). It is essential for the degradation of carbohydrates via glycolysis. The chain is Enolase from Blochmanniella floridana.